Reading from the N-terminus, the 114-residue chain is Putative antiporter subunit mnhC2 (114 aa).

3 helical membrane-spanning segments follow: residues 3 to 23 (LILLLVIGFLVFIGTYMILSI), 25 to 45 (LIRIVIGISIYTHAGNLIIMS), and 72 to 92 (AIVLTAIVIGFGMTAFLLVLI).

This sequence belongs to the CPA3 antiporters (TC 2.A.63) subunit C family. May form a heterooligomeric complex that consists of seven subunits: mnhA2, mnhB2, mnhC2, mnhD2, mnhE2, mnhF2 and mnhG2.

Its subcellular location is the cell membrane. The protein is Putative antiporter subunit mnhC2 (mnhC2) of Staphylococcus epidermidis (strain ATCC 12228 / FDA PCI 1200).